The primary structure comprises 114 residues: Iron-sulfur cluster insertion protein ErpA (114 aa).

3 residues coordinate iron-sulfur cluster: C42, C106, and C108.

The protein belongs to the HesB/IscA family. Homodimer. Iron-sulfur cluster is required as a cofactor.

Required for insertion of 4Fe-4S clusters for at least IspG. The chain is Iron-sulfur cluster insertion protein ErpA from Salmonella typhi.